The sequence spans 332 residues: 4-hydroxy-3-methylbut-2-enyl diphosphate reductase (332 aa).

Cys34 is a [4Fe-4S] cluster binding site. His63 and His96 together coordinate (2E)-4-hydroxy-3-methylbut-2-enyl diphosphate. Dimethylallyl diphosphate is bound by residues His63 and His96. The isopentenyl diphosphate site is built by His63 and His96. Cys118 serves as a coordination point for [4Fe-4S] cluster. His146 is a (2E)-4-hydroxy-3-methylbut-2-enyl diphosphate binding site. Position 146 (His146) interacts with dimethylallyl diphosphate. An isopentenyl diphosphate-binding site is contributed by His146. Glu148 functions as the Proton donor in the catalytic mechanism. Thr186 lines the (2E)-4-hydroxy-3-methylbut-2-enyl diphosphate pocket. A [4Fe-4S] cluster-binding site is contributed by Cys216. The (2E)-4-hydroxy-3-methylbut-2-enyl diphosphate site is built by Ser244, Ser245, Asn246, and Ser289. Ser244, Ser245, Asn246, and Ser289 together coordinate dimethylallyl diphosphate. 4 residues coordinate isopentenyl diphosphate: Ser244, Ser245, Asn246, and Ser289.

This sequence belongs to the IspH family. Requires [4Fe-4S] cluster as cofactor.

The enzyme catalyses isopentenyl diphosphate + 2 oxidized [2Fe-2S]-[ferredoxin] + H2O = (2E)-4-hydroxy-3-methylbut-2-enyl diphosphate + 2 reduced [2Fe-2S]-[ferredoxin] + 2 H(+). It carries out the reaction dimethylallyl diphosphate + 2 oxidized [2Fe-2S]-[ferredoxin] + H2O = (2E)-4-hydroxy-3-methylbut-2-enyl diphosphate + 2 reduced [2Fe-2S]-[ferredoxin] + 2 H(+). It participates in isoprenoid biosynthesis; dimethylallyl diphosphate biosynthesis; dimethylallyl diphosphate from (2E)-4-hydroxy-3-methylbutenyl diphosphate: step 1/1. Its pathway is isoprenoid biosynthesis; isopentenyl diphosphate biosynthesis via DXP pathway; isopentenyl diphosphate from 1-deoxy-D-xylulose 5-phosphate: step 6/6. Catalyzes the conversion of 1-hydroxy-2-methyl-2-(E)-butenyl 4-diphosphate (HMBPP) into a mixture of isopentenyl diphosphate (IPP) and dimethylallyl diphosphate (DMAPP). Acts in the terminal step of the DOXP/MEP pathway for isoprenoid precursor biosynthesis. The polypeptide is 4-hydroxy-3-methylbut-2-enyl diphosphate reductase (Mycobacterium leprae (strain TN)).